The chain runs to 189 residues: Orcokinin peptides (189 aa).

The N-terminal stretch at 1–21 (MRGAGGALAVAVAALLVCCSA) is a signal peptide. 2 propeptides span residues 22 to 124 (DPHQ…TFVK) and 145 to 174 (FYHL…PIGS).

It belongs to the orcokinin family. As to expression, orcokinin-like peptide: Expressed in corpora cardiaca (CC), corpora allata (CA), antennal lobe (AL) and gnathal ganglion (GNG) (at protein level). Expression in CC, CA and GNG detected in some animals, in AL in few animals (at protein level). Orcokinin-like peptide precursor-related peptide: Expressed in corpora cardiaca (CC), corpora allata (CA), antennal lobe (AL) and gnathal ganglion (GNG) (at protein level). Expression in GNG detected in most animals, expression in CC, CA and AL detected in some animals (at protein level).

Its subcellular location is the secreted. Its function is as follows. Myotropic peptides. This chain is Orcokinin peptides, found in Agrotis ipsilon (Black cutworm moth).